The primary structure comprises 406 residues: Arginine deiminase (406 aa).

The active-site Amidino-cysteine intermediate is C396.

The protein belongs to the arginine deiminase family.

Its subcellular location is the cytoplasm. It carries out the reaction L-arginine + H2O = L-citrulline + NH4(+). The protein operates within amino-acid degradation; L-arginine degradation via ADI pathway; carbamoyl phosphate from L-arginine: step 1/2. This Aliivibrio salmonicida (strain LFI1238) (Vibrio salmonicida (strain LFI1238)) protein is Arginine deiminase.